Consider the following 141-residue polypeptide: Small ribosomal subunit protein uS8c (141 aa).

It belongs to the universal ribosomal protein uS8 family. In terms of assembly, part of the 30S ribosomal subunit.

The protein resides in the plastid. It is found in the chloroplast. In terms of biological role, one of the primary rRNA binding proteins, it binds directly to 16S rRNA central domain where it helps coordinate assembly of the platform of the 30S subunit. The protein is Small ribosomal subunit protein uS8c (rps8) of Pleurastrum terricola (Filamentous green alga).